Reading from the N-terminus, the 278-residue chain is MNIENTLLKQDVWRFIDNTTINPAFDAIQSFATDDTLCRSVGARMAPSTVRGWVHEKTVSLGIQDSKLPDIDKGIAFLQKQGYRVVVRNSGGLAVVLDSGVLNLSMVLPDAERGIAIERGYETMFTLIKDMFVDCNEVIEAKEIEDSYCPGSYDLSIQGKKFAGISQRRMAKGVAVQIYLAIDGDQTTRSELIRDFYTISGKAKQTKYTFPDVNPNVMGSLSDLMKNDISLNGTLVRLFNSLRHYAGDLVSGTLTSEELDLFPAYYERLIARNDKVLT.

Positions 44–250 constitute a BPL/LPL catalytic domain; sequence RMAPSTVRGW…SLRHYAGDLV (207 aa). The active-site Acyl-thioester intermediate is the Cys149.

It belongs to the octanoyltransferase LipL family.

It carries out the reaction N(6)-[(R)-lipoyl]-L-lysyl-[glycine-cleavage complex H protein] + L-lysyl-[lipoyl-carrier protein] = L-lysyl-[glycine-cleavage complex H protein] + N(6)-[(R)-lipoyl]-L-lysyl-[lipoyl-carrier protein]. It functions in the pathway protein modification; protein lipoylation via exogenous pathway. In terms of biological role, catalyzes the amidotransfer (transamidation) of the lipoyl moiety from lipoyl-GcvH to the lipoyl domain of the E2 subunit of lipoate-dependent enzymes. Takes part in a pathway for scavenging of lipoic acid derived from eukaryotic host cells. Cannot use lipoyl-tripeptide (DK(L)A), lipoamide (LD), or free lipoate as substrate. This chain is Lipoyl-[GcvH]:protein N-lipoyltransferase, found in Listeria monocytogenes serovar 1/2a (strain ATCC BAA-679 / EGD-e).